Reading from the N-terminus, the 253-residue chain is Ubiquinone biosynthesis O-methyltransferase (253 aa).

Arginine 45, glycine 76, aspartate 97, and methionine 140 together coordinate S-adenosyl-L-methionine.

This sequence belongs to the methyltransferase superfamily. UbiG/COQ3 family.

The enzyme catalyses a 3-demethylubiquinol + S-adenosyl-L-methionine = a ubiquinol + S-adenosyl-L-homocysteine + H(+). It catalyses the reaction a 3-(all-trans-polyprenyl)benzene-1,2-diol + S-adenosyl-L-methionine = a 2-methoxy-6-(all-trans-polyprenyl)phenol + S-adenosyl-L-homocysteine + H(+). It functions in the pathway cofactor biosynthesis; ubiquinone biosynthesis. In terms of biological role, O-methyltransferase that catalyzes the 2 O-methylation steps in the ubiquinone biosynthetic pathway. The polypeptide is Ubiquinone biosynthesis O-methyltransferase (Parvibaculum lavamentivorans (strain DS-1 / DSM 13023 / NCIMB 13966)).